A 495-amino-acid polypeptide reads, in one-letter code: Glutamate--tRNA ligase 1 (495 aa).

The 'HIGH' region signature appears at 10 to 20 (PSPTGALHMGG). Positions 251 to 255 (KLSKR) match the 'KMSKS' region motif. Residue K254 participates in ATP binding.

Belongs to the class-I aminoacyl-tRNA synthetase family. Glutamate--tRNA ligase type 1 subfamily. In terms of assembly, monomer.

The protein resides in the cytoplasm. The catalysed reaction is tRNA(Glu) + L-glutamate + ATP = L-glutamyl-tRNA(Glu) + AMP + diphosphate. In terms of biological role, catalyzes the attachment of glutamate to tRNA(Glu) in a two-step reaction: glutamate is first activated by ATP to form Glu-AMP and then transferred to the acceptor end of tRNA(Glu). The polypeptide is Glutamate--tRNA ligase 1 (Syntrophomonas wolfei subsp. wolfei (strain DSM 2245B / Goettingen)).